Here is a 1166-residue protein sequence, read N- to C-terminus: Folliculin-interacting protein 1 (1166 aa).

The 442-residue stretch at 37 to 478 (FDPSQIRLIV…TVMPNGQPPI (442 aa)) folds into the uDENN FNIP1/2-type domain. Ser220, Ser230, Ser232, and Ser261 each carry phosphoserine; by AMPK. At Thr294 the chain carries Phosphothreonine. Position 296 is a phosphoserine (Ser296). Residues 486–1092 (SSQSVDMLAK…VSNLLHSTLQ (607 aa)) enclose the cDENN FNIP1/2-type domain. Ser593 carries the post-translational modification Phosphoserine; by AMPK. Ser594 bears the Phosphoserine mark. The Zn(2+) site is built by Cys608 and Cys610. The short motif at 608–615 (CNCKYCSH) is the Cys degron element. Positions 611-612 (KY) are KY-finger. The Zn(2+) site is built by Cys613 and His615. 2 positions are modified to phosphoserine: Ser760 and Ser763. 2 disordered regions span residues 781–817 (TKPL…VSEE) and 912–956 (LVPH…HDMT). 2 stretches are compositionally biased toward basic and acidic residues: residues 783–805 (PLKE…KDQS) and 915–925 (HGDKESSDKKI). Residues 929–1166 (TEWDIPRNES…HSPYVAQILL (238 aa)) are interaction with HSP90AA1. Ser938 bears the Phosphoserine; alternate; by CK2 mark. A glycan (O-linked (GlcNAc) serine; alternate) is linked at Ser938. Phosphoserine; by CK2 occurs at positions 939, 941, 946, and 948. In terms of domain architecture, dDENN FNIP1/2-type spans 1102-1157 (FCVMHLEDRLQELYFKSKMLSEYLRGQMRVHVKELGVVLGIESSDLPLLAAVASTH). Lys1119 is covalently cross-linked (Glycyl lysine isopeptide (Lys-Gly) (interchain with G-Cter in ubiquitin)).

It belongs to the FNIP family. In terms of assembly, homodimer and homomultimer. Heterodimer and heteromultimer with FNIP2. Interacts with FLCN (via C-terminus). Component of the lysosomal folliculin complex (LFC), composed of FLCN, FNIP1 (or FNIP2), RagA/RRAGA or RagB/RRAGB GDP-bound, RagC/RRAGC or RagD/RRAGD GTP-bound, and Ragulator. Interacts with HSPCA and with the PRKAA1, PRKAB1 and PRKAG1 subunits of 5'-AMP-activated protein kinase (AMPK). Phosphorylated FLCN and AMPK are preferentially bound. Interacts with HSP70, STIP1, PTGES3, CDC37, BRAF, GCR and CDK4. Interacts with HSP90AA1; the interaction inhibits HSP90AA1 ATPase activity. Interacts with ATP2A2. Post-translationally, phosphorylated by AMPK in response to energetic stress. Phosphorylation by AMPK in response to mitochondrial damage promotes inactivation of the non-canonical mTORC1 signaling, nuclear translocation of TFEB and TFE3, inducing transcription of lysosomal or autophagy genes. Sequential phosphorylation by CK2 promotes its gradual interaction with HSP90AA1/Hsp90. Priming phosphorylation at Ser-938 is followed by relay phosphorylation at Ser-939, Ser-941, Ser-946 and Ser-948, promoting its gradual interaction with HSP90AA1/Hsp90. This leads to incremental inhibition of HSP90AA1/Hsp90 ATPase activity and gradual activation of both kinase and non-kinase clients. Dephosphorylated by protein phosphatase 5 (PP5), promoting glycosylation by OGT. GlcNAcylation at Ser-938 by OGT following dephosphorylation by protein phosphatase 5 (PP5) promotes ubiquitination and degradation by the proteasome. In terms of processing, ubiquitinated through 'Lys-11' linkage of ubiquitin moieties at Lys-1119 following glycosylation by OGT, leading to its degradation by the proteasome. Ubiquitinated by the CRL2(FEM1B) complex in response to reductive stress: reductive stress causes reduction of the conserved Cys degron in FNIP1, followed by zinc-binding, zinc acting as a molecular glue for recognition by the CRL2(FEM1B) complex. Ubiquitination leads to FNIP1 degradation, and activation of mitochondria to recalibrate reactive oxygen species (ROS). Post-translationally, oxidation of the Cys degron in normal conditions promotes its stabilization by preventing recognition and ubiquitination by the CRL2(FEM1B) complex. In terms of tissue distribution, strong expression is found in the heart, liver placenta, muscle, nasal mucosa, salivary gland and uvula and moderate expression in kidney and lung. Higher levels detected in clear cell renal cell carcinoma (RCC) and chromophobe RCC than in normal kidney tissue. Expressed in peripheral blood mononuclear cells.

The protein resides in the lysosome membrane. The protein localises to the cytoplasm. Its subcellular location is the cytosol. Binding partner of the GTPase-activating protein FLCN: involved in the cellular response to amino acid availability by regulating the non-canonical mTORC1 signaling cascade controlling the MiT/TFE factors TFEB and TFE3. Required to promote FLCN recruitment to lysosomes and interaction with Rag GTPases, leading to activation of the non-canonical mTORC1 signaling. In low-amino acid conditions, component of the lysosomal folliculin complex (LFC) on the membrane of lysosomes, which inhibits the GTPase-activating activity of FLCN, thereby inactivating mTORC1 and promoting nuclear translocation of TFEB and TFE3. Upon amino acid restimulation, disassembly of the LFC complex liberates the GTPase-activating activity of FLCN, leading to activation of mTORC1 and subsequent inactivation of TFEB and TFE3. Together with FLCN, regulates autophagy: following phosphorylation by ULK1, interacts with GABARAP and promotes autophagy. In addition to its role in mTORC1 signaling, also acts as a co-chaperone of HSP90AA1/Hsp90: following gradual phosphorylation by CK2, inhibits the ATPase activity of HSP90AA1/Hsp90, leading to activate both kinase and non-kinase client proteins of HSP90AA1/Hsp90. Acts as a scaffold to load client protein FLCN onto HSP90AA1/Hsp90. Competes with the activating co-chaperone AHSA1 for binding to HSP90AA1, thereby providing a reciprocal regulatory mechanism for chaperoning of client proteins. Also acts as a core component of the reductive stress response by inhibiting activation of mitochondria in normal conditions: in response to reductive stress, the conserved Cys degron is reduced, leading to recognition and polyubiquitylation by the CRL2(FEM1B) complex, followed by proteasomal. Required for B-cell development. The polypeptide is Folliculin-interacting protein 1 (Homo sapiens (Human)).